A 685-amino-acid polypeptide reads, in one-letter code: Galactocerebrosidase (685 aa).

Residues 1–42 (MAEWLLSASWQRRAKAMTAAAGSAGRAAVPLLLCALLAPGGA) form the signal peptide. Thr109 contacts substrate. N-linked (GlcNAc...) asparagine glycosylation occurs at Asn143. Residues Trp151 and Asn197 each contribute to the substrate site. Residue Glu198 is the Proton donor/acceptor of the active site. Glu274 (nucleophile) is an active-site residue. An intrachain disulfide couples Cys287 to Cys394. Asn379 carries N-linked (GlcNAc...) asparagine glycosylation. Arg396 lines the substrate pocket. Asn403, Asn556, Asn559, and Asn602 each carry an N-linked (GlcNAc...) asparagine glycan.

The protein belongs to the glycosyl hydrolase 59 family. In terms of tissue distribution, detected in urine. Detected in testis, brain and placenta (at protein level). Detected in kidney and liver.

The protein resides in the lysosome. It catalyses the reaction a beta-D-galactosyl-(1&lt;-&gt;1')-N-acylsphing-4-enine + H2O = an N-acylsphing-4-enine + D-galactose. The catalysed reaction is beta-D-galactosyl-(1&lt;-&gt;1)-sphing-4-enine + H2O = sphing-4-enine + D-galactose. The enzyme catalyses a D-galactosylceramide + H2O = an N-acyl-sphingoid base + D-galactose. In terms of biological role, hydrolyzes the galactose ester bonds of glycolipids such as galactosylceramide and galactosylsphingosine. Enzyme with very low activity responsible for the lysosomal catabolism of galactosylceramide, a major lipid in myelin, kidney and epithelial cells of small intestine and colon. In Homo sapiens (Human), this protein is Galactocerebrosidase.